Reading from the N-terminus, the 305-residue chain is GMP synthase [glutamine-hydrolyzing] subunit B (305 aa).

Residues 2–184 (VKTEKFIQKS…LGLPPEIQHR (183 aa)) form the GMPS ATP-PPase domain. ATP is bound at residue 29–35 (SGGVDSS).

As to quaternary structure, heterodimer composed of a glutamine amidotransferase subunit (A) and a GMP-binding subunit (B).

It catalyses the reaction XMP + L-glutamine + ATP + H2O = GMP + L-glutamate + AMP + diphosphate + 2 H(+). The protein operates within purine metabolism; GMP biosynthesis; GMP from XMP (L-Gln route): step 1/1. Catalyzes the synthesis of GMP from XMP. This Methanoregula boonei (strain DSM 21154 / JCM 14090 / 6A8) protein is GMP synthase [glutamine-hydrolyzing] subunit B.